The following is a 393-amino-acid chain: High mobility group protein DSP1 (393 aa).

The disordered stretch occupies residues 153-179 (QMQQQQQQQNVINSASPMSRVKADAKP). 2 consecutive DNA-binding regions (HMG box) follow at residues 179–249 (PRGR…QNYV) and 271–339 (PKRS…TEYK). The segment covering 364 to 374 (LLAAAAQQQHQ) has biased composition (low complexity). A disordered region spans residues 364–393 (LLAAAAQQQHQQLEEQHDDDDGDGDDDENQ). The span at 379–393 (QHDDDDGDGDDDENQ) shows a compositional bias: acidic residues.

It belongs to the HMGB family.

It localises to the nucleus. The protein localises to the chromosome. Binds preferentially single-stranded DNA and unwinds double-stranded DNA. The protein is High mobility group protein DSP1 (Dsp1) of Drosophila melanogaster (Fruit fly).